We begin with the raw amino-acid sequence, 220 residues long: Fructose-6-phosphate aldolase (220 aa).

Lysine 85 (schiff-base intermediate with substrate) is an active-site residue.

This sequence belongs to the transaldolase family. Type 3A subfamily. As to quaternary structure, homodecamer.

It is found in the cytoplasm. The catalysed reaction is beta-D-fructose 6-phosphate = dihydroxyacetone + D-glyceraldehyde 3-phosphate. Its function is as follows. Catalyzes the reversible formation of fructose 6-phosphate from dihydroxyacetone and D-glyceraldehyde 3-phosphate via an aldolization reaction. This chain is Fructose-6-phosphate aldolase, found in Salmonella gallinarum (strain 287/91 / NCTC 13346).